The chain runs to 395 residues: MADLAAGVAERGPRLSLWSSLDQRLVWVVAATALLGLVMVASASISMAEQATGDPFYFFKRQIFFALLGLGMALALLQIPLATWERAGPGLLLGALALLVLVLIPGVGREVNGAVRWIPLGVFNLQVAEVVKVLLALYLAGFLVRRQQQLRTSMAAFLVPVLVSAACAFLLLLQPDFGTALMLMALAVGLLYLAGAPLWRFAALVGVLAAAAAALVVYSPYRWQRVTAFMDPWSDPFNTGFQLTQSLIAIGRGDWLGVGLGGSVQKLFYLPEAHTDFVFSVLAEELGWLGVLAVVLLFSYIVWRAMAVGWQCHRHRLPFAGYLAWAVGLALGLQAFINMGVATGLLPTKGLTLPLFSYGGSSALATGAMVGLLLRCGYELAQARAEGRRPEEAAS.

Residues 1–24 are Cytoplasmic-facing; the sequence is MADLAAGVAERGPRLSLWSSLDQR. The helical transmembrane segment at 25–45 threads the bilayer; that stretch reads LVWVVAATALLGLVMVASASI. Residues 46–62 lie on the Periplasmic side of the membrane; the sequence is SMAEQATGDPFYFFKRQ. A helical transmembrane segment spans residues 63–83; it reads IFFALLGLGMALALLQIPLAT. Over 84–86 the chain is Cytoplasmic; it reads WER. A helical membrane pass occupies residues 87–107; the sequence is AGPGLLLGALALLVLVLIPGV. The Periplasmic segment spans residues 108–116; it reads GREVNGAVR. A helical transmembrane segment spans residues 117 to 137; that stretch reads WIPLGVFNLQVAEVVKVLLAL. At 138 to 152 the chain is on the cytoplasmic side; sequence YLAGFLVRRQQQLRT. Residues 153-173 traverse the membrane as a helical segment; that stretch reads SMAAFLVPVLVSAACAFLLLL. The Periplasmic segment spans residues 174 to 178; sequence QPDFG. The helical transmembrane segment at 179 to 199 threads the bilayer; it reads TALMLMALAVGLLYLAGAPLW. A topological domain (cytoplasmic) is located at residue arginine 200. Residues 201–221 form a helical membrane-spanning segment; that stretch reads FAALVGVLAAAAAALVVYSPY. Residues 222 to 276 lie on the Periplasmic side of the membrane; the sequence is RWQRVTAFMDPWSDPFNTGFQLTQSLIAIGRGDWLGVGLGGSVQKLFYLPEAHTD. A helical transmembrane segment spans residues 277-297; sequence FVFSVLAEELGWLGVLAVVLL. Residues 298–316 are Cytoplasmic-facing; sequence FSYIVWRAMAVGWQCHRHR. A helical transmembrane segment spans residues 317 to 337; the sequence is LPFAGYLAWAVGLALGLQAFI. The Periplasmic portion of the chain corresponds to 338–352; that stretch reads NMGVATGLLPTKGLT. A helical membrane pass occupies residues 353–373; the sequence is LPLFSYGGSSALATGAMVGLL. The Cytoplasmic portion of the chain corresponds to 374–395; that stretch reads LRCGYELAQARAEGRRPEEAAS.

The protein belongs to the SEDS family. FtsW subfamily.

It localises to the cell inner membrane. The enzyme catalyses [GlcNAc-(1-&gt;4)-Mur2Ac(oyl-L-Ala-gamma-D-Glu-L-Lys-D-Ala-D-Ala)](n)-di-trans,octa-cis-undecaprenyl diphosphate + beta-D-GlcNAc-(1-&gt;4)-Mur2Ac(oyl-L-Ala-gamma-D-Glu-L-Lys-D-Ala-D-Ala)-di-trans,octa-cis-undecaprenyl diphosphate = [GlcNAc-(1-&gt;4)-Mur2Ac(oyl-L-Ala-gamma-D-Glu-L-Lys-D-Ala-D-Ala)](n+1)-di-trans,octa-cis-undecaprenyl diphosphate + di-trans,octa-cis-undecaprenyl diphosphate + H(+). The protein operates within cell wall biogenesis; peptidoglycan biosynthesis. Its function is as follows. Peptidoglycan polymerase that is essential for cell division. This chain is Probable peptidoglycan glycosyltransferase FtsW, found in Halorhodospira halophila (strain DSM 244 / SL1) (Ectothiorhodospira halophila (strain DSM 244 / SL1)).